Here is a 598-residue protein sequence, read N- to C-terminus: Elongation factor 4 (598 aa).

A tr-type G domain is found at 2 to 184; that stretch reads DNVRNFAIIA…AIITKLPAPQ (183 aa). GTP is bound by residues 14 to 19 and 131 to 134; these read DHGKST and NKVD.

It belongs to the TRAFAC class translation factor GTPase superfamily. Classic translation factor GTPase family. LepA subfamily.

It is found in the cell membrane. It carries out the reaction GTP + H2O = GDP + phosphate + H(+). Functionally, required for accurate and efficient protein synthesis under certain stress conditions. May act as a fidelity factor of the translation reaction, by catalyzing a one-codon backward translocation of tRNAs on improperly translocated ribosomes. Back-translocation proceeds from a post-translocation (POST) complex to a pre-translocation (PRE) complex, thus giving elongation factor G a second chance to translocate the tRNAs correctly. Binds to ribosomes in a GTP-dependent manner. This is Elongation factor 4 from Wolbachia sp. subsp. Brugia malayi (strain TRS).